Reading from the N-terminus, the 62-residue chain is Mu-elapitoxin-Na1a (62 aa).

4 disulfides stabilise this stretch: Cys3/Cys22, Cys15/Cys40, Cys44/Cys55, and Cys56/Cys61.

The protein belongs to the three-finger toxin family. Short-chain subfamily. Orphan group XV sub-subfamily. Expressed by the venom gland.

The protein resides in the secreted. In terms of biological role, potent inhibitor of human Nav1.8/SCN10A (IC(50)=141-380 nM). Is highly selective for this channel and acts in a reversible manner. Shows a depolarizing shift of activation and hyperpolarizing shift of inactivation. In contrast to the very similar cytotoxin A5 (AC P62375), does not seem to bind integrin alpha-V/beta-3, since it does not promote or inhibit the proliferation of HUVECs and C-PAE cells. In vivo, in rodent models of inflammatory and neuropathic pain, it alleviates nociceptive behaviors more potently than does morphine. It displays no evident cytotoxic, hemolytic and cardiotoxic activities and produces no obvious adverse responses in mice even at a dose 30-fold higher than that producing a significant analgesic effect. The protein is Mu-elapitoxin-Na1a of Naja atra (Chinese cobra).